Here is a 111-residue protein sequence, read N- to C-terminus: MLGRALRPGWLGITRTVVKKPSCGSYFNRTFQTAINTTMPPMQEGMLSTMMMMTATATRITGTVSEPLNGSNIVMQLDSVMRKRKKKMKKHKLRKRRKREKAERRKLSQGR.

Over residues 82–99 the composition is skewed to basic residues; the sequence is RKRKKKMKKHKLRKRRKR. The tract at residues 82–111 is disordered; it reads RKRKKKMKKHKLRKRRKREKAERRKLSQGR. Over residues 100–111 the composition is skewed to basic and acidic residues; the sequence is EKAERRKLSQGR.

The protein belongs to the mitochondrion-specific ribosomal protein mS38 family. As to quaternary structure, component of the mitochondrial small ribosomal subunit (mt-SSU). Mature yeast 74S mitochondrial ribosomes consist of a small (37S) and a large (54S) subunit. The 37S small subunit contains a 15S ribosomal RNA (15S mt-rRNA) and 34 different proteins. The 54S large subunit contains a 21S rRNA (21S mt-rRNA) and 46 different proteins.

The protein resides in the mitochondrion. It is found in the mitochondrion inner membrane. Its function is as follows. Component of the mitochondrial ribosome (mitoribosome), a dedicated translation machinery responsible for the synthesis of mitochondrial genome-encoded proteins, including at least some of the essential transmembrane subunits of the mitochondrial respiratory chain. The mitoribosomes are attached to the mitochondrial inner membrane and translation products are cotranslationally integrated into the membrane. mS38 is also involved in the splicing of the COX1 mRNA. This Saccharomyces cerevisiae (strain ATCC 204508 / S288c) (Baker's yeast) protein is Small ribosomal subunit protein mS38 (QRI5).